The following is a 208-amino-acid chain: GTP cyclohydrolase 1 (208 aa).

C98, H101, and C169 together coordinate Zn(2+).

Belongs to the GTP cyclohydrolase I family. Toroid-shaped homodecamer, composed of two pentamers of five dimers.

It carries out the reaction GTP + H2O = 7,8-dihydroneopterin 3'-triphosphate + formate + H(+). Its pathway is cofactor biosynthesis; 7,8-dihydroneopterin triphosphate biosynthesis; 7,8-dihydroneopterin triphosphate from GTP: step 1/1. This chain is GTP cyclohydrolase 1, found in Agrobacterium fabrum (strain C58 / ATCC 33970) (Agrobacterium tumefaciens (strain C58)).